The primary structure comprises 57 residues: MLCAHFSDQGPAHLTTSKSAFLSNKKTSTLKHLLGETRSDGSACNSGISGGRGRKIP.

The tract at residues 38 to 57 (RSDGSACNSGISGGRGRKIP) is disordered.

In terms of tissue distribution, highly expressed in prostate, rectum, and distal colon, and weakly expressed in bladder. Expressed in prostate cancer cell lines.

Its subcellular location is the nucleus. This Homo sapiens (Human) protein is Small nuclear protein PRAC1 (PRAC1).